The primary structure comprises 647 residues: Protein INVOLVED IN DE NOVO 2 (647 aa).

Disordered stretches follow at residues 1-20 and 101-123; these read MGSTVILSSDDEDSDISESE and SASEAEPSSKRQKNGNPIQDCDH. A compositionally biased stretch (acidic residues) spans 9–20; that stretch reads SDDEDSDISESE. The stretch at 253 to 508 forms a coiled coil; sequence IAELTEEEAR…NIMKEWNTNI (256 aa).

In terms of assembly, interacts with FMD1/IDNL1. Forms a complex with FMD1/IDNL1 and FMD2/INDL2. Can form homodimers. Interacts with MORC6.

Functionally, forms a complex with FDM1/IDNL1 and FDM2/IDNL2 that is required for RNA-directed DNA methylation (RdDM) and that functions at a downstream step of the RdDM pathway and downstream of small interfering RNA (siRNA) formation. Required for de novo DNA methylation, siRNA accumulation and siRNA-mediated maintenance methylation. Required for several post-transcriptional gene silencing pathways. Binds double-stranded RNAs (dsRNAs) with 5'-overhangs through its XS domain. Binds long non-coding RNA (lncRNA) in an AGO4-dependent manner and associates with DRM2, resulting in DNA methylation of RdDM target loci. Mediates the silencing of a subset of MORC6 target loci. In Arabidopsis thaliana (Mouse-ear cress), this protein is Protein INVOLVED IN DE NOVO 2.